Consider the following 315-residue polypeptide: MASFASLVKKELTQLEVHPEHAKAELSALIRMNGSLTLMAHRFVLNIQTENPAIARRIYSLIRQVYHHEANLVVHRKMKLKKNYQYIVRLTEGVNDILSDLSILDPDTMAISTTVPTSVLKEPQRMRSYLRGAFLASGSVNNPETSRYHLEIYSLYDNHNAGILKMMNHFHLNARTVERRSGYIVYLKEAEKIADFLQVIGATNAMLKFEDVRIMRDMRNSVNRLVNCENANMNKTIDAAQKQIENINYLKNHVGLDNLPAKLREIAVLRLAHPDVSLQELGAMMPSGQISKSGVNHRLRKLNQIAEGYQQPEDA.

Residues 277–311 (SLQELGAMMPSGQISKSGVNHRLRKLNQIAEGYQQ) constitute a DNA-binding region (H-T-H motif).

It belongs to the WhiA family.

Involved in cell division and chromosome segregation. The sequence is that of Probable cell division protein WhiA from Lacticaseibacillus casei (strain BL23) (Lactobacillus casei).